The following is a 522-amino-acid chain: Mediator of RNA polymerase II transcription subunit 1.2 (522 aa).

A coiled-coil region spans residues 13–40; it reads LLEQRKNQELNIEHIDEEMRLEQVRQAA.

The protein belongs to the Mediator complex subunit 1 family. In terms of assembly, component of the Mediator complex.

The protein resides in the nucleus. In terms of biological role, component of the Mediator complex, a coactivator involved in the regulated transcription of nearly all RNA polymerase II-dependent genes. Mediator functions as a bridge to convey information from gene-specific regulatory proteins to the basal RNA polymerase II transcription machinery. Mediator is recruited to promoters by direct interactions with regulatory proteins and serves as a scaffold for the assembly of a functional preinitiation complex with RNA polymerase II and the general transcription factors. The protein is Mediator of RNA polymerase II transcription subunit 1.2 (mdt-1.2) of Caenorhabditis elegans.